The following is a 217-amino-acid chain: Heart- and neural crest derivatives-expressed protein 2 (217 aa).

Positions 76–116 are disordered; the sequence is DHSHYGGVPPGAGPPGLGGPRPVKRRGTANRKERRRTQSIN. The span at 83 to 94 shows a compositional bias: gly residues; it reads VPPGAGPPGLGG. Residues 97–112 are compositionally biased toward basic residues; it reads PVKRRGTANRKERRRT. A bHLH domain is found at 99–151; it reads KRRGTANRKERRRTQSINSAFAELRECIPNVPADTKLSKIKTLRLATSYIAYL.

In terms of assembly, efficient DNA binding requires dimerization with another bHLH protein. Forms homodimers and heterodimers with TCF3 gene products E12 and E47, HAND1 and HEY1, HEY2 and HEYL (hairy-related transcription factors).

Its subcellular location is the nucleus. Functionally, essential for cardiac morphogenesis, particularly for the formation of the right ventricle and of the aortic arch arteries. Required for vascular development and regulation of angiogenesis, possibly through a VEGF signaling pathway. Also plays an important role in limb development, particularly in the establishment of anterior-posterior polarization, acting as an upstream regulator of sonic hedgehog (SHH) induction in the limb bud. Is involved in the development of branchial arches, which give rise to unique structures in the head and neck. Binds DNA on E-box consensus sequence 5'-CANNTG-3'. The chain is Heart- and neural crest derivatives-expressed protein 2 (Hand2) from Rattus norvegicus (Rat).